The chain runs to 449 residues: Trigger factor (449 aa).

In terms of domain architecture, PPIase FKBP-type spans 162 to 243 (GEFVTINITA…ITATKQRELP (82 aa)). The span at 428–437 (GNEIDPKEYF) shows a compositional bias: basic and acidic residues. The tract at residues 428–449 (GNEIDPKEYFGEEEVAETESEA) is disordered. Residues 438–449 (GEEEVAETESEA) are compositionally biased toward acidic residues.

The protein belongs to the FKBP-type PPIase family. Tig subfamily.

The protein resides in the cytoplasm. The catalysed reaction is [protein]-peptidylproline (omega=180) = [protein]-peptidylproline (omega=0). Involved in protein export. Acts as a chaperone by maintaining the newly synthesized protein in an open conformation. Functions as a peptidyl-prolyl cis-trans isomerase. This is Trigger factor from Corynebacterium glutamicum (strain R).